Consider the following 188-residue polypeptide: UPF0301 protein CPn_0139/CP_0633/CPj0139/CpB0140 (188 aa).

The protein belongs to the UPF0301 (AlgH) family.

The protein is UPF0301 protein CPn_0139/CP_0633/CPj0139/CpB0140 of Chlamydia pneumoniae (Chlamydophila pneumoniae).